The sequence spans 356 residues: Uroporphyrinogen decarboxylase (356 aa).

Residues 25–29, Asp75, Tyr152, Thr207, and His326 each bind substrate; that span reads RQAGR.

This sequence belongs to the uroporphyrinogen decarboxylase family. In terms of assembly, homodimer.

Its subcellular location is the cytoplasm. It catalyses the reaction uroporphyrinogen III + 4 H(+) = coproporphyrinogen III + 4 CO2. Its pathway is porphyrin-containing compound metabolism; protoporphyrin-IX biosynthesis; coproporphyrinogen-III from 5-aminolevulinate: step 4/4. Catalyzes the decarboxylation of four acetate groups of uroporphyrinogen-III to yield coproporphyrinogen-III. The protein is Uroporphyrinogen decarboxylase of Magnetococcus marinus (strain ATCC BAA-1437 / JCM 17883 / MC-1).